Reading from the N-terminus, the 652-residue chain is WD repeat-containing protein 70 (652 aa).

2 disordered regions span residues 1–22 and 45–171; these read MERP…LAVT and RRTA…IPDS. A compositionally biased stretch (basic and acidic residues) spans 45 to 76; it reads RRTAVERSRKTLEAREREEEMNREKELRRQNE. The span at 92 to 102 shows a compositional bias: low complexity; that stretch reads SKSSSRDTSSS. Acidic residues-rich tracts occupy residues 103–115 and 146–162; these read ESDE…DDEL and EDVE…EEEE. WD repeat units lie at residues 178 to 217, 225 to 266, 279 to 319, 328 to 367, 374 to 413, 419 to 464, and 467 to 506; these read HGTK…ASFK, CECH…ECIK, GHTA…KQKS, GKKV…HPKF, DPGT…KPLF, PTMF…RVYE, and ITDA…QRGA. A Glycyl lysine isopeptide (Lys-Gly) (interchain with G-Cter in SUMO2) cross-link involves residue Lys294. The residue at position 450 (Lys450) is an N6-acetyllysine. The span at 538–563 shows a compositional bias: basic and acidic residues; that stretch reads REPRQRSTRKQLEKDRLDPLKSHKPE. Positions 538–577 are disordered; that stretch reads REPRQRSTRKQLEKDRLDPLKSHKPEPPVAGPGRGGRVGT. Thr577 is subject to Phosphothreonine. Residues Lys588 and Lys594 each participate in a glycyl lysine isopeptide (Lys-Gly) (interchain with G-Cter in SUMO2) cross-link. Phosphoserine is present on residues Ser619 and Ser636. Residues 629–652 form a disordered region; sequence TMFAQVESDDEETKNEPEWKKRKI. The span at 642–652 shows a compositional bias: basic and acidic residues; sequence KNEPEWKKRKI.

It belongs to the WD repeat GAD-1 family.

The chain is WD repeat-containing protein 70 (WDR70) from Bos taurus (Bovine).